The sequence spans 226 residues: Ribonuclease 3 (226 aa).

An RNase III domain is found at 6–128 (FNKLQKKMGY…IIGGIFLDSN (123 aa)). Glu-41 provides a ligand contact to Mg(2+). Residue Asp-45 is part of the active site. Asn-114 and Glu-117 together coordinate Mg(2+). Glu-117 is a catalytic residue. Residues 155-225 (DPKTRLQEYL…AKQALLLFNI (71 aa)) form the DRBM domain.

Belongs to the ribonuclease III family. Homodimer. Mg(2+) is required as a cofactor.

The protein localises to the cytoplasm. It catalyses the reaction Endonucleolytic cleavage to 5'-phosphomonoester.. Digests double-stranded RNA. Involved in the processing of primary rRNA transcript to yield the immediate precursors to the large and small rRNAs (23S and 16S). Processes some mRNAs, and tRNAs when they are encoded in the rRNA operon. Processes pre-crRNA and tracrRNA of type II CRISPR loci if present in the organism. This chain is Ribonuclease 3, found in Wigglesworthia glossinidia brevipalpis.